Consider the following 227-residue polypeptide: MKQHIKNLPIILASSSLTRVELLDRIKIIPAQIIPADIDETPNLRELPAPLAIRLAYGKAIKVASQIEKSSIIIAADTVAAVGRRILPKATTYEEVKHCIKMVSGRRHRVYTGLCIIKKENNQLTFRQKIVQTIIKFKKLSDEEINFYSSLDEGIDKAGGCKISGYAEAFISFISGSYSNIMGLPLFETVNALTSLGFRYSDNTANVCKDLSTKSMVQNHFGKPSIS.

D77 acts as the Proton acceptor in catalysis.

It belongs to the Maf family. A divalent metal cation serves as cofactor.

The protein resides in the cytoplasm. It carries out the reaction a ribonucleoside 5'-triphosphate + H2O = a ribonucleoside 5'-phosphate + diphosphate + H(+). The enzyme catalyses a 2'-deoxyribonucleoside 5'-triphosphate + H2O = a 2'-deoxyribonucleoside 5'-phosphate + diphosphate + H(+). Functionally, nucleoside triphosphate pyrophosphatase. May have a dual role in cell division arrest and in preventing the incorporation of modified nucleotides into cellular nucleic acids. This is Nucleoside triphosphate pyrophosphatase from Rickettsia typhi (strain ATCC VR-144 / Wilmington).